Here is a 213-residue protein sequence, read N- to C-terminus: Ribonuclease HII (213 aa).

An RNase H type-2 domain is found at 18-213; that stretch reads GLHAGVDEVG…RPVKERLAKR (196 aa). A divalent metal cation contacts are provided by Asp24, Glu25, and Asp116.

This sequence belongs to the RNase HII family. Mn(2+) is required as a cofactor. Requires Mg(2+) as cofactor.

It localises to the cytoplasm. The catalysed reaction is Endonucleolytic cleavage to 5'-phosphomonoester.. In terms of biological role, endonuclease that specifically degrades the RNA of RNA-DNA hybrids. This is Ribonuclease HII from Shewanella woodyi (strain ATCC 51908 / MS32).